Here is a 478-residue protein sequence, read N- to C-terminus: Solute carrier family 49 member 4 (478 aa).

The disordered stretch occupies residues 1 to 27; the sequence is MGSGWSSEEEERQPLLGPGLGPAPGAA. At 1–51 the chain is on the cytoplasmic side; sequence MGSGWSSEEEERQPLLGPGLGPAPGAARRGREATAVLPAAGPNPGRVYGRR. The short motif at 15–16 is the Di-leucine motif; mediates lysosomal localization element; the sequence is LL. A helical transmembrane segment spans residues 52-72; sequence WLVLLLFSLLAFAQGLVWNTW. Topologically, residues 73–89 are lumenal; sequence GPIQNSARQAYGFSGWD. A helical transmembrane segment spans residues 90–110; that stretch reads IALLVLWGPIGFLPCFAFMWL. Topologically, residues 111–117 are cytoplasmic; it reads LDKRGLR. A helical membrane pass occupies residues 118–138; it reads VTVLLTSFLMVLGTGLRCIPV. Over 139–152 the chain is Lumenal; it reads SDLALKKRLIHGGQ. Residues 153–173 traverse the membrane as a helical segment; that stretch reads ILNGLAGPTVMNAAPFLSTTW. At 174–184 the chain is on the cytoplasmic side; the sequence is FSADERATATA. The helical transmembrane segment at 185-205 threads the bilayer; that stretch reads IASMLSYLGGACAFLVGPLVV. Over 206 to 229 the chain is Lumenal; sequence PAPNGTAPLLAAESSRAHIKDRIE. Asparagine 209 carries an N-linked (GlcNAc...) asparagine glycan. The helical transmembrane segment at 230–250 threads the bilayer; that stretch reads TVLYAEFGVVCLIFSATLAYF. At 251-281 the chain is on the cytoplasmic side; it reads PPRPPLPPSVAAASQRLSYRRSFCRLLSNLR. The chain crosses the membrane as a helical span at residues 282 to 302; sequence FLMIALAYAIPLGVFAGWSGV. The Lumenal portion of the chain corresponds to 303–314; the sequence is LDLILTPVHVSQ. The helical transmembrane segment at 315-335 threads the bilayer; it reads VDAGWIGFWSIVGGCVVGIAM. Residues 336 to 347 lie on the Cytoplasmic side of the membrane; it reads ARFADFIRGMLK. A helical transmembrane segment spans residues 348-368; that stretch reads LILLLLFSGATLSSTWFTLTC. At 369–384 the chain is on the lumenal side; sequence LNSITHLPLTTVTLYA. Residues 385–405 traverse the membrane as a helical segment; sequence SCILLGVFLNSSVPIFFELFV. At 406–414 the chain is on the cytoplasmic side; that stretch reads ETVYPVPEG. The helical transmembrane segment at 415–435 threads the bilayer; sequence ITCGVVTFLSNMFMGVLLFFV. Over 436–442 the chain is Lumenal; it reads TFYHTEL. Residues 443 to 463 form a helical membrane-spanning segment; it reads SWFNWCLPGSCLLSLLLILCF. Over 464-478 the chain is Cytoplasmic; it reads RESYDRLYLDVVVSV.

The protein belongs to the major facilitator superfamily. Cleaved in lysosomes by cathepsin L between Leu-214 and Ala-261, generating a N-glycosylated N-terminal and a non-glycosylated C-terminal fragment.

Its subcellular location is the lysosome membrane. The catalysed reaction is pyridoxine(out) + n H(+)(out) = pyridoxine(in) + n H(+)(in). Mediates H(+)-dependent pyridoxine transport. This is Solute carrier family 49 member 4 (Slc49a4) from Mus musculus (Mouse).